A 276-amino-acid polypeptide reads, in one-letter code: F420-dependent methylenetetrahydromethanopterin dehydrogenase (276 aa).

Belongs to the MTD family.

The catalysed reaction is 5,10-methylenetetrahydromethanopterin + oxidized coenzyme F420-(gamma-L-Glu)(n) + 2 H(+) = 5,10-methenyl-5,6,7,8-tetrahydromethanopterin + reduced coenzyme F420-(gamma-L-Glu)(n). It functions in the pathway one-carbon metabolism; methanogenesis from CO(2); 5,10-methylene-5,6,7,8-tetrahydromethanopterin from 5,10-methenyl-5,6,7,8-tetrahydromethanopterin (coenzyme F420 route): step 1/1. In terms of biological role, catalyzes the reversible reduction of methenyl-H(4)MPT(+) to methylene-H(4)MPT. This Methanococcus vannielii (strain ATCC 35089 / DSM 1224 / JCM 13029 / OCM 148 / SB) protein is F420-dependent methylenetetrahydromethanopterin dehydrogenase.